Here is a 184-residue protein sequence, read N- to C-terminus: Dual specificity protein phosphatase 22 (184 aa).

Gly-2 carries the N-myristoyl glycine lipid modification. The Tyrosine-protein phosphatase domain maps to 4-144; sequence GMNKILPGLY…LQEFEKHEVH (141 aa). Residue Ser-58 is modified to Phosphoserine. Cys-88 functions as the Phosphocysteine intermediate in the catalytic mechanism. Residues Leu-89, Ala-90, Val-92, Ser-93, and Arg-94 each coordinate a protein.

This sequence belongs to the protein-tyrosine phosphatase family. Non-receptor class dual specificity subfamily. In terms of assembly, monomer. Interacts with LCK; the interaction is direct. Interacts with UBR2; the interaction is direct. Post-translationally, myristoylation regulates subcellular location, and is necessary for activation of JNK. Ubiquitous. Highest expression seen in heart, placenta, lung, liver, kidney and pancreas.

The protein localises to the cytoplasm. It catalyses the reaction O-phospho-L-tyrosyl-[protein] + H2O = L-tyrosyl-[protein] + phosphate. It carries out the reaction O-phospho-L-seryl-[protein] + H2O = L-seryl-[protein] + phosphate. The catalysed reaction is O-phospho-L-threonyl-[protein] + H2O = L-threonyl-[protein] + phosphate. Its function is as follows. Dual specificity phosphatase; can dephosphorylate both phosphotyrosine and phosphoserine or phosphothreonine residues. Activates the JNK signaling pathway. Inhibits T-cell receptor signaling and T-cell mediated immune responses, acting, at least in part, by inducing degradation of E3 ubiquitin ligase UBR2. Dephosphorylates and thereby induces 'Lys-48'-linked ubiquitination of UBR2, leading to proteasomal degradation of UBR2. Dephosphorylates and thereby inactivates tyrosine kinase LCK. Inhibits UBR2-mediated 'Lys-63'-linked ubiquitination of LCK. May play a role in B-cell receptor (BCR) signaling and B-cell function. This Homo sapiens (Human) protein is Dual specificity protein phosphatase 22 (DUSP22).